Reading from the N-terminus, the 968-residue chain is Phosphatidylserine decarboxylase 2 proenzyme (968 aa).

Residues 1 to 25 (MAKVMRLIIFVCVALVAISVPAASS) form the signal peptide. Catalysis depends on charge relay system; for autoendoproteolytic cleavage activity residues Asp500, His570, and Ser683. The active-site Schiff-base intermediate with substrate; via pyruvic acid; for decarboxylase activity is Ser683. At Ser683 the chain carries Pyruvic acid (Ser); by autocatalysis.

The protein belongs to the phosphatidylserine decarboxylase family. In terms of assembly, heterodimer of a large membrane-associated beta subunit and a small pyruvoyl-containing alpha subunit. Requires pyruvate as cofactor. Post-translationally, is synthesized initially as an inactive proenzyme. Formation of the active enzyme involves a self-maturation process in which the active site pyruvoyl group is generated from an internal serine residue via an autocatalytic post-translational modification. Two non-identical subunits are generated from the proenzyme in this reaction, and the pyruvate is formed at the N-terminus of the alpha chain, which is derived from the carboxyl end of the proenzyme. The autoendoproteolytic cleavage occurs by a canonical serine protease mechanism, in which the side chain hydroxyl group of the serine supplies its oxygen atom to form the C-terminus of the beta chain, while the remainder of the serine residue undergoes an oxidative deamination to produce ammonia and the pyruvoyl prosthetic group on the alpha chain. During this reaction, the Ser that is part of the protease active site of the proenzyme becomes the pyruvoyl prosthetic group, which constitutes an essential element of the active site of the mature decarboxylase.

The protein localises to the parasitophorous vacuole. The protein resides in the cytoplasmic vesicle. Its subcellular location is the secretory vesicle. The catalysed reaction is a 1,2-diacyl-sn-glycero-3-phospho-L-serine + H(+) = a 1,2-diacyl-sn-glycero-3-phosphoethanolamine + CO2. The protein operates within phospholipid metabolism; phosphatidylethanolamine biosynthesis; phosphatidylethanolamine from CDP-diacylglycerol: step 2/2. In terms of biological role, catalyzes the formation of phosphatidylethanolamine (PtdEtn) from phosphatidylserine (PtdSer). Plays a central role in phospholipid metabolism and in the interorganelle trafficking of phosphatidylserine. Can act on liposomal and host cell PtdSer. This is Phosphatidylserine decarboxylase 2 proenzyme from Toxoplasma gondii (strain ATCC 50853 / GT1).